Reading from the N-terminus, the 580-residue chain is Serine/threonine-protein kinase PINK1, mitochondrial (580 aa).

A mitochondrion-targeting transit peptide spans 1 to 77 (MAVRQALGRG…RFFRQSVAGL (77 aa)). The Mitochondrial intermembrane segment spans residues 78–93 (AARIQRQFMVRARGGA). A helical transmembrane segment spans residues 94–110 (GPCGRAVFLAFGLGLGL). The segment at 111–117 (IEEKQAE) is required for outer membrane localization. The Cytoplasmic segment spans residues 111 to 580 (IEEKQAEGRR…LLLSSWRAAP (470 aa)). The 355-residue stretch at 156 to 510 (YLIGQAIGKG…LAANVLHLSL (355 aa)) folds into the Protein kinase domain. ATP contacts are provided by residues 162–170 (IGKGCNAAV) and K186. The residue at position 227 (S227) is a Phosphoserine; by autocatalysis. D361 acts as the Proton acceptor in catalysis. S401 is modified (phosphoserine; by autocatalysis).

This sequence belongs to the protein kinase superfamily. Ser/Thr protein kinase family. As to quaternary structure, upon mitochondrial depolarization, it forms a supercomplex with TOM and TIM23 complexes. PINK1-TOM-TIM23 supercomplex formation requires PINK1 interaction with TOMM20 and TOMM70 and is critical for PINK1 stabilization at the outer mitochondrial membrane, kinase activation and downstream mitophagy. Upon mitochondrial depolarization, interacts with TIMM23; the interaction is required for PINK1 accumulation at the outer mitochondrial membrane, kinase activation by autophosphorylation and PRKN recruitement to mitochondria. Interacts with PRKN. Interacts with FBXO7. Forms a complex with PRKN and PARK7. Interacts with NENF. It depends on Mg(2+) as a cofactor. Proteolytically cleaved. In healthy cells, the precursor is continuously imported into the inner mitochondrial membrane (IMM), where it is proteolytically cleaved by mitochondrial-processing peptidase (MPP) and then undergoes further proteolytic cleavage by PARL or AFG3L2 to give rise to the 52 kDa short form. The 52 kDa short form is then released into the cytosol where it rapidly undergoes proteasome-dependent degradation. In unhealthy cells, when cellular stress conditions lead to the loss of mitochondrial membrane potential, mitochondrial import is impaired leading to the precursor accumulating on the outer mitochondrial membrane (OMM). If accumulation at the OMM fails and it is imported into the depolarized mitochondria, it undergoes cleavage by the IMM protease OMA1, promoting its subsequent degradation by the proteasome. Post-translationally, autophosphorylated. Loss of mitochondrial membrane potential results in the precursor accumulating on the outer mitochondrial membrane (OMM) where it is activated by autophosphorylation. Autophosphorylation at Ser-227 and Ser-401 is essential for selective recruitment of PRKN to depolarized mitochondria, via PINK1-dependent phosphorylation of ubiquitin and PRKN. High levels expressed in testis, lower levels in brain, heart, lung, liver and kidney.

It localises to the mitochondrion outer membrane. It is found in the mitochondrion inner membrane. Its subcellular location is the cytoplasm. The protein resides in the cytosol. It carries out the reaction L-seryl-[protein] + ATP = O-phospho-L-seryl-[protein] + ADP + H(+). The enzyme catalyses L-threonyl-[protein] + ATP = O-phospho-L-threonyl-[protein] + ADP + H(+). Serine/threonine-protein kinase which acts as a sensor of mitochondrial damage and protects against mitochondrial dysfunction during cellular stress. It phosphorylates mitochondrial proteins to coordinate mitochondrial quality control mechanisms that remove and replace dysfunctional mitochondrial components. Depending on the severity of mitochondrial damage, activity ranges from preventing apoptosis and stimulating mitochondrial biogenesis to eliminating severely damaged mitochondria via PINK1-PRKN-dependent mitophagy. When cellular stress results in irreversible mitochondrial damage, PINK1 accumulates at the outer mitochondrial membrane (OMM) where it phosphorylates pre-existing polyubiquitin chains at 'Ser-65', recruits PRKN from the cytosol to the OMM and activates PRKN by phosphorylation at 'Ser-65'. Activated PRKN then ubiquinates VDAC1 and other OMM proteins to initiate mitophagy. The PINK1-PRKN pathway also promotes fission of damaged mitochondria by phosphorylating and thus promoting the PRKN-dependent degradation of mitochondrial proteins involved in fission such as MFN2. This prevents the refusion of unhealthy mitochondria with the mitochondrial network or initiates mitochondrial fragmentation facilitating their later engulfment by autophagosomes. Also promotes mitochondrial fission independently of PRKN and ATG7-mediated mitophagy, via the phosphorylation and activation of DNM1L. Regulates motility of damaged mitochondria by promoting the ubiquitination and subsequent degradation of MIRO1 and MIRO2; in motor neurons, this likely inhibits mitochondrial intracellular anterograde transport along the axons which probably increases the chance of the mitochondria undergoing mitophagy in the soma. Required for ubiquinone reduction by mitochondrial complex I by mediating phosphorylation of complex I subunit NDUFA10. Phosphorylates LETM1, positively regulating its mitochondrial calcium transport activity. This chain is Serine/threonine-protein kinase PINK1, mitochondrial (Pink1), found in Mus musculus (Mouse).